The chain runs to 557 residues: Potassium-transporting ATPase potassium-binding subunit (557 aa).

The next 12 helical transmembrane spans lie at 5–25 (GFLLIATFLLVLMVLARPLGS), 63–83 (LCAILGLNMLGLAVLFFMLLG), 132–152 (GLTVQNFLSAASGIAVIFALI), 170–190 (LLRITLWVLVPVALLIALFFI), 253–273 (FVQMLAIFLIPTALCFAFGEV), 283–303 (LLWAMSVIFVICVGVVMWAEV), 329–349 (VLVSSLFAVVTTAASCGAVIA), 356–376 (ALGGMVPMWLMQIGEVVFGGV), 379–399 (GLYGMMLFVLLAVFIAGLMIG), 416–436 (LTALAILVTPTLVLMGAALAM), 484–504 (LLAFCMFVGRFGVIIPVMAIA), and 526–546 (LFVGLLIGTVLLVGALTFIPA).

Belongs to the KdpA family. As to quaternary structure, the system is composed of three essential subunits: KdpA, KdpB and KdpC.

Its subcellular location is the cell inner membrane. Functionally, part of the high-affinity ATP-driven potassium transport (or Kdp) system, which catalyzes the hydrolysis of ATP coupled with the electrogenic transport of potassium into the cytoplasm. This subunit binds the periplasmic potassium ions and delivers the ions to the membrane domain of KdpB through an intramembrane tunnel. This chain is Potassium-transporting ATPase potassium-binding subunit, found in Escherichia coli (strain K12 / MC4100 / BW2952).